Reading from the N-terminus, the 693-residue chain is Polyribonucleotide nucleotidyltransferase (693 aa).

Residues Asp-487 and Asp-493 each contribute to the Mg(2+) site. One can recognise a KH domain in the interval 554 to 613; it reads PRIYTIKINPEKIKDVIGKGGSIIRMLTEETGTVIEIKDDGIVKISAINGEKAKYAIKRI. In terms of domain architecture, S1 motif spans 623–691; that stretch reads GKIYSGKVTR…RQGRIRLSMK (69 aa).

This sequence belongs to the polyribonucleotide nucleotidyltransferase family. Component of the RNA degradosome, which is a multiprotein complex involved in RNA processing and mRNA degradation. The cofactor is Mg(2+).

It is found in the cytoplasm. The enzyme catalyses RNA(n+1) + phosphate = RNA(n) + a ribonucleoside 5'-diphosphate. Functionally, involved in mRNA degradation. Catalyzes the phosphorolysis of single-stranded polyribonucleotides processively in the 3'- to 5'-direction. The protein is Polyribonucleotide nucleotidyltransferase of Buchnera aphidicola subsp. Cinara cedri (strain Cc).